Reading from the N-terminus, the 369-residue chain is 2-aminoethylphosphonate--pyruvate transaminase (369 aa).

N6-(pyridoxal phosphate)lysine is present on K193.

Belongs to the class-V pyridoxal-phosphate-dependent aminotransferase family. PhnW subfamily. Homodimer. Requires pyridoxal 5'-phosphate as cofactor.

It carries out the reaction (2-aminoethyl)phosphonate + pyruvate = phosphonoacetaldehyde + L-alanine. Functionally, involved in phosphonate degradation. The sequence is that of 2-aminoethylphosphonate--pyruvate transaminase from Pseudomonas fluorescens (strain Pf0-1).